We begin with the raw amino-acid sequence, 96 residues long: Small ribosomal subunit protein uS19 (96 aa).

This sequence belongs to the universal ribosomal protein uS19 family.

In terms of biological role, protein S19 forms a complex with S13 that binds strongly to the 16S ribosomal RNA. The protein is Small ribosomal subunit protein uS19 of Koribacter versatilis (strain Ellin345).